The following is a 778-amino-acid chain: LPS-assembly protein LptD (778 aa).

A signal peptide spans 1–23; that stretch reads MKTRYSVLSVAMTAAFYTQYAQA.

It belongs to the LptD family. Component of the lipopolysaccharide transport and assembly complex. Interacts with LptE and LptA.

It localises to the cell outer membrane. Its function is as follows. Together with LptE, is involved in the assembly of lipopolysaccharide (LPS) at the surface of the outer membrane. This Actinobacillus pleuropneumoniae serotype 7 (strain AP76) protein is LPS-assembly protein LptD.